The following is a 741-amino-acid chain: uncharacterized protein (741 aa).

5 consecutive transmembrane segments (helical) span residues 34-54, 76-96, 120-140, 156-176, and 187-207; these read WLLW…LLII, LIIP…FING, LAVL…FVSL, LSVF…LIII, and LLLL…AFSI. Residues 404-423 are compositionally biased toward basic and acidic residues; sequence EAEEKERQEKEEKEKAEKDN. 2 disordered regions span residues 404–473 and 555–647; these read EAEE…FRPR and QKEL…ENAK. Residues 424-439 show a composition bias toward polar residues; sequence GNGQDSNKVNSVSTEP. Basic and acidic residues-rich tracts occupy residues 445–465 and 555–573; these read SDAD…DSSK and QKEL…DQKS. Residues 623 to 643 are compositionally biased toward acidic residues; it reads DNTDESEDKQSEEEEKFDEEI. 2 helical membrane passes run 655 to 675 and 715 to 735; these read AFFN…ENGA and VIIA…FFAY.

This sequence to M.pneumoniae MPN_333.

The protein localises to the cell membrane. This is an uncharacterized protein from Mycoplasma pneumoniae (strain ATCC 29342 / M129 / Subtype 1) (Mycoplasmoides pneumoniae).